The chain runs to 207 residues: Putative 3-methyladenine DNA glycosylase (207 aa).

Belongs to the DNA glycosylase MPG family.

The polypeptide is Putative 3-methyladenine DNA glycosylase (Listeria monocytogenes serovar 1/2a (strain ATCC BAA-679 / EGD-e)).